The following is a 341-amino-acid chain: MRTGDFDYELSEEKIAKYPPAERGSTRLLVLNRHSGAVVHASYASLDLFLQPGDLLVLNNTRVLRARLYASKSTGARIELMLLEKHQEEQNRVLYRGKLKKGDKLMAHDQELLVTDIVDHGIARIAVCGERSLSDLFERFGGVPIPPYLKRDAEEVDRERYQTVFAELPGSVAAPTASLNMTSELLDTLRRKGVDMVTLTLHVGLGTFLPVRADALEEHVMHREYYSIPATLVEKIRKVKTTGGRVIAVGTTVTRALEHAGERMETFTGDAPLTGEADIFIYPGYQFRIIDCLLTNFHAPRSTVLMLTAAFAGPDHLRNAYQKALEEGYRFLSYGDSMFIA.

Belongs to the QueA family. Monomer.

The protein localises to the cytoplasm. It carries out the reaction 7-aminomethyl-7-carbaguanosine(34) in tRNA + S-adenosyl-L-methionine = epoxyqueuosine(34) in tRNA + adenine + L-methionine + 2 H(+). Its pathway is tRNA modification; tRNA-queuosine biosynthesis. Transfers and isomerizes the ribose moiety from AdoMet to the 7-aminomethyl group of 7-deazaguanine (preQ1-tRNA) to give epoxyqueuosine (oQ-tRNA). In Pelodictyon phaeoclathratiforme (strain DSM 5477 / BU-1), this protein is S-adenosylmethionine:tRNA ribosyltransferase-isomerase.